The sequence spans 319 residues: Glucokinase (319 aa).

An ATP-binding site is contributed by 8-13 (GDIGGT).

This sequence belongs to the bacterial glucokinase family.

It is found in the cytoplasm. The catalysed reaction is D-glucose + ATP = D-glucose 6-phosphate + ADP + H(+). The protein is Glucokinase of Chromohalobacter salexigens (strain ATCC BAA-138 / DSM 3043 / CIP 106854 / NCIMB 13768 / 1H11).